The primary structure comprises 294 residues: uncharacterized protein (294 aa).

This is an uncharacterized protein from Methanocaldococcus jannaschii (strain ATCC 43067 / DSM 2661 / JAL-1 / JCM 10045 / NBRC 100440) (Methanococcus jannaschii).